A 246-amino-acid chain; its full sequence is 3-deoxy-manno-octulosonate cytidylyltransferase (246 aa).

Belongs to the KdsB family.

Its subcellular location is the cytoplasm. It catalyses the reaction 3-deoxy-alpha-D-manno-oct-2-ulosonate + CTP = CMP-3-deoxy-beta-D-manno-octulosonate + diphosphate. It participates in nucleotide-sugar biosynthesis; CMP-3-deoxy-D-manno-octulosonate biosynthesis; CMP-3-deoxy-D-manno-octulosonate from 3-deoxy-D-manno-octulosonate and CTP: step 1/1. Its pathway is bacterial outer membrane biogenesis; lipopolysaccharide biosynthesis. Activates KDO (a required 8-carbon sugar) for incorporation into bacterial lipopolysaccharide in Gram-negative bacteria. The polypeptide is 3-deoxy-manno-octulosonate cytidylyltransferase (Rickettsia felis (strain ATCC VR-1525 / URRWXCal2) (Rickettsia azadi)).